We begin with the raw amino-acid sequence, 210 residues long: Guanylate kinase (210 aa).

The Guanylate kinase-like domain maps to 6–184; the sequence is GNIYIVVAPS…ARLDLISIVR (179 aa). 13-20 contacts ATP; the sequence is APSGAGKT.

The protein belongs to the guanylate kinase family.

It localises to the cytoplasm. It carries out the reaction GMP + ATP = GDP + ADP. Essential for recycling GMP and indirectly, cGMP. The polypeptide is Guanylate kinase (Chromobacterium violaceum (strain ATCC 12472 / DSM 30191 / JCM 1249 / CCUG 213 / NBRC 12614 / NCIMB 9131 / NCTC 9757 / MK)).